A 391-amino-acid polypeptide reads, in one-letter code: Cyclin-B1-2 (391 aa).

Belongs to the cyclin family. Cyclin AB subfamily.

In Oryza sativa subsp. japonica (Rice), this protein is Cyclin-B1-2 (CYCB1-2).